Here is a 690-residue protein sequence, read N- to C-terminus: Eukaryotic translation initiation factor 3 subunit B (690 aa).

The segment covering 1 to 11 (MAKKKSEEHSG) has biased composition (basic and acidic residues). Residues 1–33 (MAKKKSEEHSGTDANDSDYQEEPNFDDPPGFVD) are disordered. Residues 15–25 (NDSDYQEEPNF) are compositionally biased toward acidic residues. An RRM domain is found at 57–141 (SVVVVDNIPK…HTFAVNLFTD (85 aa)). WD repeat units follow at residues 207–246 (TRERFTDTFVKWSPLGTYVVTFHKPGVAIWGGSSFQKIQK), 293–331 (DGMSVLSMFRWSHDDKFVARMGENSIHIYETPSFYLLDL), 334–369 (IKIPGIRGFSWSPTDNVIAYWVEEQNQIPARVTLME), 442–484 (EIRE…KPSL), and 530–575 (PDHF…IKRT). The stretch at 595–645 (EEKQKEIKKNLKKYYAAFEQKDRLRLTRASKELLEKRSQLRETFMEYRNKR) forms a coiled coil.

Belongs to the eIF-3 subunit B family. Component of the eukaryotic translation initiation factor 3 (eIF-3) complex. The eIF-3 complex interacts with pix. Interacts with mxt.

It is found in the cytoplasm. RNA-binding component of the eukaryotic translation initiation factor 3 (eIF-3) complex, which is involved in protein synthesis of a specialized repertoire of mRNAs and, together with other initiation factors, stimulates binding of mRNA and methionyl-tRNAi to the 40S ribosome. The eIF-3 complex specifically targets and initiates translation of a subset of mRNAs involved in cell proliferation. This Drosophila melanogaster (Fruit fly) protein is Eukaryotic translation initiation factor 3 subunit B.